The following is a 272-amino-acid chain: Activator of basal transcription 1 (272 aa).

Met1 carries the N-acetylmethionine modification. A compositionally biased stretch (basic and acidic residues) spans Met1 to Lys17. The disordered stretch occupies residues Met1 to Gly38. The segment covering Leu23–Asp34 has biased composition (acidic residues). The region spanning Gly46–Leu142 is the RRM domain. The stretch at Ala161–Arg191 forms a coiled coil. Positions Ala197–Ser272 are disordered.

It belongs to the ESF2/ABP1 family. Interacts with ESF1/ABTAP. Interacts with IGHMBP2.

It localises to the nucleus. The protein resides in the nucleolus. Functionally, could be a novel TATA-binding protein (TBP) which can function as a basal transcription activator. Can act as a regulator of basal transcription for class II genes. This Pongo abelii (Sumatran orangutan) protein is Activator of basal transcription 1 (ABT1).